A 557-amino-acid chain; its full sequence is ABC1 family protein MCP2 homolog (557 aa).

The N-terminal 33 residues, 1 to 33, are a transit peptide targeting the mitochondrion; the sequence is MFSRFSWPRITRCFRSYPKKKSSCISFTHHARE. Topologically, residues 34 to 39 are mitochondrial matrix; sequence HTNFKK. A helical transmembrane segment spans residues 40–56; that stretch reads PAVVGASITLMASVALV. The Mitochondrial intermembrane segment spans residues 57-557; sequence DFDPVKHAGV…NYFYYKHMYL (501 aa).

This sequence belongs to the protein kinase superfamily. ADCK protein kinase family.

It localises to the mitochondrion inner membrane. Functionally, involved in mitochondrial lipid homeostasis. The chain is ABC1 family protein MCP2 homolog from Schizosaccharomyces pombe (strain 972 / ATCC 24843) (Fission yeast).